The sequence spans 455 residues: Bifunctional protein GlmU (455 aa).

Residues 1–225 form a pyrophosphorylase region; it reads MEVVILAAGQ…IWETLGVNSK (225 aa). UDP-N-acetyl-alpha-D-glucosamine contacts are provided by residues 6-9, K20, Q71, 76-77, 98-100, G135, E150, N165, and N223; these read LAAG, GT, and YGD. D100 lines the Mg(2+) pocket. Residue N223 participates in Mg(2+) binding. Residues 226–246 are linker; the sequence is AQLAELERLHQRNIATRLMED. Positions 247–455 are N-acetyltransferase; that stretch reads GVTLFDPSRI…KRPVKKKAGE (209 aa). R329 and K347 together coordinate UDP-N-acetyl-alpha-D-glucosamine. H359 acts as the Proton acceptor in catalysis. UDP-N-acetyl-alpha-D-glucosamine contacts are provided by Y362 and N373. Acetyl-CoA contacts are provided by residues A376, 382–383, S401, A419, and R436; that span reads NY.

This sequence in the N-terminal section; belongs to the N-acetylglucosamine-1-phosphate uridyltransferase family. The protein in the C-terminal section; belongs to the transferase hexapeptide repeat family. Homotrimer. The cofactor is Mg(2+).

Its subcellular location is the cytoplasm. It catalyses the reaction alpha-D-glucosamine 1-phosphate + acetyl-CoA = N-acetyl-alpha-D-glucosamine 1-phosphate + CoA + H(+). The catalysed reaction is N-acetyl-alpha-D-glucosamine 1-phosphate + UTP + H(+) = UDP-N-acetyl-alpha-D-glucosamine + diphosphate. It functions in the pathway nucleotide-sugar biosynthesis; UDP-N-acetyl-alpha-D-glucosamine biosynthesis; N-acetyl-alpha-D-glucosamine 1-phosphate from alpha-D-glucosamine 6-phosphate (route II): step 2/2. It participates in nucleotide-sugar biosynthesis; UDP-N-acetyl-alpha-D-glucosamine biosynthesis; UDP-N-acetyl-alpha-D-glucosamine from N-acetyl-alpha-D-glucosamine 1-phosphate: step 1/1. The protein operates within bacterial outer membrane biogenesis; LPS lipid A biosynthesis. Its function is as follows. Catalyzes the last two sequential reactions in the de novo biosynthetic pathway for UDP-N-acetylglucosamine (UDP-GlcNAc). The C-terminal domain catalyzes the transfer of acetyl group from acetyl coenzyme A to glucosamine-1-phosphate (GlcN-1-P) to produce N-acetylglucosamine-1-phosphate (GlcNAc-1-P), which is converted into UDP-GlcNAc by the transfer of uridine 5-monophosphate (from uridine 5-triphosphate), a reaction catalyzed by the N-terminal domain. The polypeptide is Bifunctional protein GlmU (Aromatoleum aromaticum (strain DSM 19018 / LMG 30748 / EbN1) (Azoarcus sp. (strain EbN1))).